The chain runs to 215 residues: Small ribosomal subunit protein uS7 (215 aa).

The protein belongs to the universal ribosomal protein uS7 family. In terms of assembly, part of the 30S ribosomal subunit.

One of the primary rRNA binding proteins, it binds directly to 16S rRNA where it nucleates assembly of the head domain of the 30S subunit. Is located at the subunit interface close to the decoding center. This is Small ribosomal subunit protein uS7 from Thermococcus kodakarensis (strain ATCC BAA-918 / JCM 12380 / KOD1) (Pyrococcus kodakaraensis (strain KOD1)).